A 213-amino-acid polypeptide reads, in one-letter code: Pyridoxine/pyridoxamine 5'-phosphate oxidase (213 aa).

Residues 60–65 (RMVLMK), 75–76 (YS), Lys-82, and Gln-104 contribute to the FMN site. Lys-65 provides a ligand contact to substrate. 3 residues coordinate substrate: Tyr-122, Arg-126, and Ser-130. FMN is bound by residues 139–140 (QS) and Trp-184. 190–192 (RLH) is a substrate binding site. An FMN-binding site is contributed by Arg-194.

This sequence belongs to the pyridoxamine 5'-phosphate oxidase family. As to quaternary structure, homodimer. Requires FMN as cofactor.

It carries out the reaction pyridoxamine 5'-phosphate + O2 + H2O = pyridoxal 5'-phosphate + H2O2 + NH4(+). The enzyme catalyses pyridoxine 5'-phosphate + O2 = pyridoxal 5'-phosphate + H2O2. It participates in cofactor metabolism; pyridoxal 5'-phosphate salvage; pyridoxal 5'-phosphate from pyridoxamine 5'-phosphate: step 1/1. Its pathway is cofactor metabolism; pyridoxal 5'-phosphate salvage; pyridoxal 5'-phosphate from pyridoxine 5'-phosphate: step 1/1. Functionally, catalyzes the oxidation of either pyridoxine 5'-phosphate (PNP) or pyridoxamine 5'-phosphate (PMP) into pyridoxal 5'-phosphate (PLP). This is Pyridoxine/pyridoxamine 5'-phosphate oxidase from Rhodopseudomonas palustris (strain BisB18).